Consider the following 249-residue polypeptide: Vitamin B12 import ATP-binding protein BtuD (249 aa).

Residues 5–233 (MQLQDVAETT…PNLAQAYGMN (229 aa)) enclose the ABC transporter domain. 33–40 (GPNGAGKS) contacts ATP.

It belongs to the ABC transporter superfamily. Vitamin B12 importer (TC 3.A.1.13.1) family. As to quaternary structure, the complex is composed of two ATP-binding proteins (BtuD), two transmembrane proteins (BtuC) and a solute-binding protein (BtuF).

Its subcellular location is the cell inner membrane. The catalysed reaction is an R-cob(III)alamin(out) + ATP + H2O = an R-cob(III)alamin(in) + ADP + phosphate + H(+). Functionally, part of the ABC transporter complex BtuCDF involved in vitamin B12 import. Responsible for energy coupling to the transport system. The sequence is that of Vitamin B12 import ATP-binding protein BtuD from Citrobacter koseri (strain ATCC BAA-895 / CDC 4225-83 / SGSC4696).